Here is a 199-residue protein sequence, read N- to C-terminus: uncharacterized protein (199 aa).

The next 3 membrane-spanning stretches (helical) occupy residues 22 to 44 (VVVV…YLFL), 65 to 87 (TGFI…HLAL), and 91 to 108 (HTIT…FFFW).

It belongs to the ycf1 family.

The protein resides in the mitochondrion membrane. This is an uncharacterized protein from Arabidopsis thaliana (Mouse-ear cress).